The following is a 766-amino-acid chain: MRLWKAVVVTLAFMSVDICVTTAIYVFSHLDRSLLEDIRHFNIFDSVLDLWAACLYRSCLLLGATIGVAKNSALGPRRLRASWLVITLVCLFVGIYAMVKLLLFSEVRRPIRDPWFWALFVWTYISLGASFLLWWLLSTVRPGTQALEPGAATEAEGFPGSGRPPPEQASGATLQKLLSYTKPDVAFLVAASFFLIVAALGETFLPYYTGRAIDGIVIQKSMDQFSTAVVIVCLLAIGSSFAAGIRGGIFTLIFARLNIRLRNCLFRSLVSQETSFFDENRTGDLISRLTSDTTMVSDLVSQNINVFLRNTVKVTGVVVFMFSLSWQLSLVTFMGFPIIMMVSNIYGKYYKRLSKEVQNALARASNTAEETISAMKTVRSFANEEEEAEVYLRKLQQVYKLNRKEAAAYMYYVWGSGLTLLVVQVSILYYGGHLVISGQMTSGNLIAFIIYEFVLGDCMESVGSVYSGLMQGVGAAEKVFEFIDRQPTMVHDGSLAPDHLEGRVDFENVTFTYRTRPHTQVLQNVSFSLSPGKVTALVGPSGSGKSSCVNILENFYPLEGGRVLLDGKPISAYDHKYLHRVISLVSQEPVLFARSITDNISYGLPTVPFEMVVEAAQKANAHGFIMELQDGYSTETGEKGAQLSGGQKQRVAMARALVRNPPVLILDEATSALDAESEYLIQQAIHGNLQKHTVLIIAHRLSTVEHAHLIVVLDKGRVVQQGTHQQLLAQGGLYAKLVQRQMLGLQPAADFTAGHNEPVANGSHKA.

The next 8 helical transmembrane spans lie at valine 7 to phenylalanine 27, valine 47 to glycine 67, leucine 84 to phenylalanine 104, phenylalanine 116 to leucine 136, valine 185 to leucine 205, phenylalanine 225 to isoleucine 245, valine 319 to isoleucine 339, and serine 416 to isoleucine 436. One can recognise an ABC transmembrane type-1 domain in the interval leucine 188–glutamine 471. An ABC transporter domain is found at valine 504–arginine 740. ATP is bound at residue glycine 539–serine 546.

This sequence belongs to the ABC transporter superfamily. ABCB family. MHC peptide exporter (TC 3.A.1.209) subfamily. As to quaternary structure, homodimer. Interacts (via TMD0 region) with LAMP1; this interaction strongly stabilizes ABCB9 and protects ABCB9 against lysosomal degradation. Interacts (via TMD0 region) with LAMP2 (isoform LAMP-2B). Interacts (via TMD0) with YIF1B; this interaction allows (but is not essential) the ER-to-Golgi trafficking and strongly depends on a salt bridge within TMD0. In terms of tissue distribution, highly expressed in testis, and at moderate levels in brain, spinal cord, and thyroid. Not expressed in monocytes but strongly expressed during differentiation of monocytes to dendritic cells and macrophages.

It is found in the lysosome membrane. It catalyses the reaction a [oligopeptide](in) + ATP + H2O = a [oligopeptide](out) + ADP + phosphate + H(+). With respect to regulation, transport activity is limited by threshold levels of luminal peptide. ATP hydrolysis is reduced in the presence of the spatial challenging 18-mer peptide by 50% and the branched 16-mer peptide by 75%. Transport rate of the longer peptides is strongly reduced. ATP-dependent low-affinity peptide transporter which translocates a broad spectrum of peptides from the cytosol to the lysosomal lumen for degradation. Displays a broad peptide length specificity from 6-mer up to at least 59-mer peptides with an optimum of 23-mers. Binds and transports smaller and larger peptides with the same affinity. Favors positively charged, aromatic or hydrophobic residues in the N- and C-terminal positions whereas negatively charged residues as well as asparagine and methionine are not favored. In Homo sapiens (Human), this protein is ABC-type oligopeptide transporter ABCB9.